A 126-amino-acid chain; its full sequence is Small ribosomal subunit protein uS11 (126 aa).

The protein belongs to the universal ribosomal protein uS11 family. In terms of assembly, part of the 30S ribosomal subunit. Interacts with proteins S7 and S18. Binds to IF-3.

Its function is as follows. Located on the platform of the 30S subunit, it bridges several disparate RNA helices of the 16S rRNA. Forms part of the Shine-Dalgarno cleft in the 70S ribosome. This chain is Small ribosomal subunit protein uS11, found in Desulfotalea psychrophila (strain LSv54 / DSM 12343).